The chain runs to 137 residues: Phosphoribosyl-AMP cyclohydrolase (137 aa).

Position 84 (D84) interacts with Mg(2+). Position 85 (C85) interacts with Zn(2+). The Mg(2+) site is built by D86 and D88. Zn(2+) contacts are provided by C101 and C108.

This sequence belongs to the PRA-CH family. In terms of assembly, homodimer. Requires Mg(2+) as cofactor. It depends on Zn(2+) as a cofactor.

The protein localises to the cytoplasm. The enzyme catalyses 1-(5-phospho-beta-D-ribosyl)-5'-AMP + H2O = 1-(5-phospho-beta-D-ribosyl)-5-[(5-phospho-beta-D-ribosylamino)methylideneamino]imidazole-4-carboxamide. Its pathway is amino-acid biosynthesis; L-histidine biosynthesis; L-histidine from 5-phospho-alpha-D-ribose 1-diphosphate: step 3/9. Catalyzes the hydrolysis of the adenine ring of phosphoribosyl-AMP. The polypeptide is Phosphoribosyl-AMP cyclohydrolase (Chlorobaculum parvum (strain DSM 263 / NCIMB 8327) (Chlorobium vibrioforme subsp. thiosulfatophilum)).